The following is a 146-amino-acid chain: MEKTITIYTDGACSGNPGKGGWGALLMYGNTRKEISGYDPATTNNRMEMMAAIRALEALKEPCRVELYSDSAYLVNAMNQGWLKRWLKNGWKTASKKPVENIDLWQEIVKLTTLHRVTFHKVKGHSDNQYNNRCDELARLAIKEQS.

The 143-residue stretch at 1 to 143 folds into the RNase H type-1 domain; it reads MEKTITIYTD…CDELARLAIK (143 aa). Mg(2+)-binding residues include Asp-10, Glu-48, Asp-70, and Asp-135.

Belongs to the RNase H family. Monomer. Mg(2+) is required as a cofactor.

The protein localises to the cytoplasm. It catalyses the reaction Endonucleolytic cleavage to 5'-phosphomonoester.. Its function is as follows. Endonuclease that specifically degrades the RNA of RNA-DNA hybrids. The chain is Ribonuclease H from Chlorobaculum parvum (strain DSM 263 / NCIMB 8327) (Chlorobium vibrioforme subsp. thiosulfatophilum).